A 261-amino-acid chain; its full sequence is Small ribosomal subunit protein uS2 (261 aa).

Belongs to the universal ribosomal protein uS2 family.

The sequence is that of Small ribosomal subunit protein uS2 from Thermodesulfovibrio yellowstonii (strain ATCC 51303 / DSM 11347 / YP87).